Consider the following 215-residue polypeptide: UPF0488 protein C8orf33 homolog (215 aa).

Disordered regions lie at residues 1–72 (MLED…DEQL), 87–111 (LRTQ…RSSK), and 158–199 (CKPV…DTKP). Residues 29–39 (AKKHKKKKKKK) show a composition bias toward basic residues. The segment covering 40–63 (AGEGKDDQQRETKTTEGETAKQET) has biased composition (basic and acidic residues). Basic and acidic residues-rich tracts occupy residues 167–178 (ERNTQPKNKTDG) and 188–199 (TNEHTKTEDTKP).

The protein belongs to the UPF0488 family.

The protein is UPF0488 protein C8orf33 homolog of Danio rerio (Zebrafish).